Here is a 748-residue protein sequence, read N- to C-terminus: LPS-assembly protein LptD (748 aa).

A signal peptide spans 1–19; sequence MSKTWGILMLSVLSAPSLA.

It belongs to the LptD family. As to quaternary structure, component of the lipopolysaccharide transport and assembly complex. Interacts with LptE and LptA.

It localises to the cell outer membrane. Its function is as follows. Together with LptE, is involved in the assembly of lipopolysaccharide (LPS) at the surface of the outer membrane. This is LPS-assembly protein LptD from Pseudoalteromonas translucida (strain TAC 125).